The following is a 324-amino-acid chain: CYFIP-related Rac1 interactor B (324 aa).

G2 carries the N-myristoyl glycine lipid modification. K74 is covalently cross-linked (Glycyl lysine isopeptide (Lys-Gly) (interchain with G-Cter in ubiquitin)).

This sequence belongs to the CYRI family. In terms of assembly, interacts with RAC1 (GTP-bound form preferentially). In terms of processing, ubiquitinated at Lys-74 upon Salmonella bacterial infection.

The protein resides in the membrane. Its subcellular location is the mitochondrion. In terms of biological role, negatively regulates RAC1 signaling and RAC1-driven cytoskeletal remodeling. Regulates chemotaxis, cell migration and epithelial polarization by controlling the polarity, plasticity, duration and extent of protrusions. Limits Rac1 mediated activation of the Scar/WAVE complex, focuses protrusion signals and regulates pseudopod complexity by inhibiting Scar/WAVE-induced actin polymerization. Protects against Salmonella bacterial infection. Attenuates processes such as macropinocytosis, phagocytosis and cell migration and restrict sopE-mediated bacterial entry. Also restricts infection mediated by Mycobacterium tuberculosis and Listeria monocytogenes. Involved in the regulation of mitochondrial dynamics and oxidative stress. This is CYFIP-related Rac1 interactor B from Homo sapiens (Human).